The primary structure comprises 358 residues: Peptide chain release factor 1 (358 aa).

The residue at position 233 (Gln-233) is an N5-methylglutamine.

It belongs to the prokaryotic/mitochondrial release factor family. In terms of processing, methylated by PrmC. Methylation increases the termination efficiency of RF1.

It localises to the cytoplasm. Peptide chain release factor 1 directs the termination of translation in response to the peptide chain termination codons UAG and UAA. The chain is Peptide chain release factor 1 from Agathobacter rectalis (strain ATCC 33656 / DSM 3377 / JCM 17463 / KCTC 5835 / VPI 0990) (Eubacterium rectale).